A 104-amino-acid chain; its full sequence is Large ribosomal subunit protein eL30 (104 aa).

Belongs to the eukaryotic ribosomal protein eL30 family.

In Tetrahymena thermophila (strain SB210), this protein is Large ribosomal subunit protein eL30 (RPL30).